Here is a 137-residue protein sequence, read N- to C-terminus: Lysozyme (137 aa).

The N-terminal stretch at 1 to 20 (MSAVLVLALVLLSLTCVTDA) is a signal peptide. The I-type lysozyme domain occupies 21-134 (ISDACLTCIC…WNAVKNQGCS (114 aa)). Cystine bridges form between cysteine 25–cysteine 102, cysteine 30–cysteine 37, cysteine 42–cysteine 51, cysteine 64–cysteine 84, cysteine 74–cysteine 80, and cysteine 98–cysteine 116. Glutamate 33 (proton donor) is an active-site residue. Catalysis depends on aspartate 45, which acts as the Nucleophile. Substrate is bound at residue 57–63 (KKSYWID). Residues tyrosine 88 and 109-111 (HNG) each bind substrate.

This sequence belongs to the glycosyl hydrolase 22 family. Type-I lysozyme subfamily.

It is found in the secreted. It catalyses the reaction Hydrolysis of (1-&gt;4)-beta-linkages between N-acetylmuramic acid and N-acetyl-D-glucosamine residues in a peptidoglycan and between N-acetyl-D-glucosamine residues in chitodextrins.. Its function is as follows. Has bacteriolytic activity. May play a role in digestion and in the host defense mechanisms against invading microbes. This is Lysozyme (lysoz) from Ostrea edulis (Native oyster).